The sequence spans 146 residues: Kappa-casein (146 aa).

3 O-linked (GalNAc...) threonine glycosylation sites follow: Thr-107, Thr-112, and Thr-118. Ser-143 carries the post-translational modification Phosphoserine.

Belongs to the kappa-casein family. In terms of tissue distribution, mammary gland specific. Secreted in milk.

The protein resides in the secreted. Its function is as follows. Kappa-casein stabilizes micelle formation, preventing casein precipitation in milk. The sequence is that of Kappa-casein (CSN3) from Dicotyles tajacu (Collared peccary).